Consider the following 324-residue polypeptide: Protease HtpX homolog (324 aa).

Transmembrane regions (helical) follow at residues 7–24 and 29–46; these read ALLL…GYLI and GALI…FTYW. Histidine 130 is a binding site for Zn(2+). The active site involves glutamate 131. Histidine 134 serves as a coordination point for Zn(2+). 2 helical membrane-spanning segments follow: residues 145–165 and 172–192; these read ITAT…FFGG and GPGL…AMLV. Glutamate 201 contacts Zn(2+). The span at 288–305 shows a compositional bias: polar residues; sequence PASTFSRGAGTAASSGTP. Positions 288 to 324 are disordered; sequence PASTFSRGAGTAASSGTPRGTGRSPWGGQPRGRGPWG.

Belongs to the peptidase M48B family. The cofactor is Zn(2+).

It localises to the cell inner membrane. The polypeptide is Protease HtpX homolog (Rhodopseudomonas palustris (strain TIE-1)).